A 425-amino-acid polypeptide reads, in one-letter code: Serine--tRNA ligase (425 aa).

Threonine 229 to glutamate 231 lines the L-serine pocket. ATP-binding positions include arginine 259 to glutamate 261 and valine 275. Glutamate 282 is a binding site for L-serine. Glutamate 349 to serine 352 is a binding site for ATP. Threonine 384 contacts L-serine.

This sequence belongs to the class-II aminoacyl-tRNA synthetase family. Type-1 seryl-tRNA synthetase subfamily. As to quaternary structure, homodimer. The tRNA molecule binds across the dimer.

The protein resides in the cytoplasm. The catalysed reaction is tRNA(Ser) + L-serine + ATP = L-seryl-tRNA(Ser) + AMP + diphosphate + H(+). It carries out the reaction tRNA(Sec) + L-serine + ATP = L-seryl-tRNA(Sec) + AMP + diphosphate + H(+). It participates in aminoacyl-tRNA biosynthesis; selenocysteinyl-tRNA(Sec) biosynthesis; L-seryl-tRNA(Sec) from L-serine and tRNA(Sec): step 1/1. Its function is as follows. Catalyzes the attachment of serine to tRNA(Ser). Is also able to aminoacylate tRNA(Sec) with serine, to form the misacylated tRNA L-seryl-tRNA(Sec), which will be further converted into selenocysteinyl-tRNA(Sec). This chain is Serine--tRNA ligase, found in Borrelia garinii subsp. bavariensis (strain ATCC BAA-2496 / DSM 23469 / PBi) (Borreliella bavariensis).